The chain runs to 140 residues: Large ribosomal subunit protein uL11 (140 aa).

The protein belongs to the universal ribosomal protein uL11 family. As to quaternary structure, part of the ribosomal stalk of the 50S ribosomal subunit. Interacts with L10 and the large rRNA to form the base of the stalk. L10 forms an elongated spine to which L12 dimers bind in a sequential fashion forming a multimeric L10(L12)X complex. One or more lysine residues are methylated.

Functionally, forms part of the ribosomal stalk which helps the ribosome interact with GTP-bound translation factors. In Pelobacter propionicus (strain DSM 2379 / NBRC 103807 / OttBd1), this protein is Large ribosomal subunit protein uL11.